We begin with the raw amino-acid sequence, 449 residues long: 3-phosphoshikimate 1-carboxyvinyltransferase (449 aa).

The tract at residues 1-29 (MSHDSVPSPITARAGTPLRGRLRPPGDKS) is disordered. Residues Lys28, Ser29, and Arg33 each coordinate 3-phosphoshikimate. Lys28 is a phosphoenolpyruvate binding site. 2 residues coordinate phosphoenolpyruvate: Gly101 and Arg129. 3-phosphoshikimate-binding residues include Ser175, Gln177, Asp330, and Lys357. Gln177 lines the phosphoenolpyruvate pocket. Catalysis depends on Asp330, which acts as the Proton acceptor. Arg361 and Arg405 together coordinate phosphoenolpyruvate.

This sequence belongs to the EPSP synthase family. Monomer.

It localises to the cytoplasm. It carries out the reaction 3-phosphoshikimate + phosphoenolpyruvate = 5-O-(1-carboxyvinyl)-3-phosphoshikimate + phosphate. It participates in metabolic intermediate biosynthesis; chorismate biosynthesis; chorismate from D-erythrose 4-phosphate and phosphoenolpyruvate: step 6/7. Catalyzes the transfer of the enolpyruvyl moiety of phosphoenolpyruvate (PEP) to the 5-hydroxyl of shikimate-3-phosphate (S3P) to produce enolpyruvyl shikimate-3-phosphate and inorganic phosphate. The chain is 3-phosphoshikimate 1-carboxyvinyltransferase from Methylobacterium sp. (strain 4-46).